The primary structure comprises 277 residues: MGIRTFRPYTPGTRQASVSDFSEITKTQPEKSLTTYKHSSQGRNNRGVVTSRHRGGGHKRLYRIIDFRRDKHNIPAKVAAIEYDPNRNARIALLYYQDGEKRYILAPADLKVGSTVISGEDAPFEIGNALPLWRIPLGSEVHNIELVAGRGGQMVRAAGASAQVVAKEGNYVTLRLPSKEVRMVRKECYATIGKVGNADVRNLKLGKAGRSRHRGKRPHVRGSVMNPVDHPHGGGEGRAPIGRPGPVTPWGKPALGAKTRNRKKASSKLIIRRRNQS.

Disordered regions lie at residues 1-20 (MGIR…SVSD), 27-55 (TQPE…RHRG), and 207-277 (KAGR…RNQS). A compositionally biased stretch (polar residues) spans 27 to 48 (TQPEKSLTTYKHSSQGRNNRGV). 2 stretches are compositionally biased toward basic residues: residues 207–220 (KAGR…RPHV) and 259–277 (TRNR…RNQS).

The protein belongs to the universal ribosomal protein uL2 family. In terms of assembly, part of the 50S ribosomal subunit. Forms a bridge to the 30S subunit in the 70S ribosome.

In terms of biological role, one of the primary rRNA binding proteins. Required for association of the 30S and 50S subunits to form the 70S ribosome, for tRNA binding and peptide bond formation. It has been suggested to have peptidyltransferase activity; this is somewhat controversial. Makes several contacts with the 16S rRNA in the 70S ribosome. This chain is Large ribosomal subunit protein uL2, found in Gloeothece citriformis (strain PCC 7424) (Cyanothece sp. (strain PCC 7424)).